Reading from the N-terminus, the 87-residue chain is Histone H1.C6/H1.C9 (87 aa).

The disordered stretch occupies residues 1–87 (MSDAAVPPKK…KKAVKKAPKK (87 aa)). A compositionally biased stretch (basic residues) spans 11-87 (ASPKKASPKK…KKAVKKAPKK (77 aa)).

It localises to the nucleus. The protein resides in the chromosome. The sequence is that of Histone H1.C6/H1.C9 from Trypanosoma cruzi.